A 247-amino-acid chain; its full sequence is ATP synthase subunit a, chloroplastic (247 aa).

5 consecutive transmembrane segments (helical) span residues 38-58 (QVLITSWVVIAILLGSVIIAV), 95-115 (VPFIGTMFLFIFVSNWSGALL), 134-154 (INTTVALALPTSVAYFYAGLT), 199-219 (LVVVVLVSLVPSLVPIPVMFL), and 220-240 (GLFTSGIQALIFATLAAAYIG).

It belongs to the ATPase A chain family. As to quaternary structure, F-type ATPases have 2 components, CF(1) - the catalytic core - and CF(0) - the membrane proton channel. CF(1) has five subunits: alpha(3), beta(3), gamma(1), delta(1), epsilon(1). CF(0) has four main subunits: a, b, b' and c.

The protein localises to the plastid. The protein resides in the chloroplast thylakoid membrane. Key component of the proton channel; it plays a direct role in the translocation of protons across the membrane. The polypeptide is ATP synthase subunit a, chloroplastic (Dioscorea elephantipes (Elephant's foot yam)).